Here is a 206-residue protein sequence, read N- to C-terminus: Large ribosomal subunit protein uL3 (206 aa).

Residues 116–149 (GFQGAIKRHNQSRGPMSHGSRYHRRPGSMGPVAP) are disordered.

It belongs to the universal ribosomal protein uL3 family. In terms of assembly, part of the 50S ribosomal subunit. Forms a cluster with proteins L14 and L19.

Its function is as follows. One of the primary rRNA binding proteins, it binds directly near the 3'-end of the 23S rRNA, where it nucleates assembly of the 50S subunit. This is Large ribosomal subunit protein uL3 from Shouchella clausii (strain KSM-K16) (Alkalihalobacillus clausii).